Here is a 187-residue protein sequence, read N- to C-terminus: Threonylcarbamoyl-AMP synthase (187 aa).

Residues 3–187 (NSELLKIIWA…LLNGYLYRKR (185 aa)) form the YrdC-like domain.

Belongs to the SUA5 family. TsaC subfamily.

It localises to the cytoplasm. It catalyses the reaction L-threonine + hydrogencarbonate + ATP = L-threonylcarbamoyladenylate + diphosphate + H2O. Functionally, required for the formation of a threonylcarbamoyl group on adenosine at position 37 (t(6)A37) in tRNAs that read codons beginning with adenine. Catalyzes the conversion of L-threonine, HCO(3)(-)/CO(2) and ATP to give threonylcarbamoyl-AMP (TC-AMP) as the acyladenylate intermediate, with the release of diphosphate. This is Threonylcarbamoyl-AMP synthase from Riesia pediculicola (strain USDA).